Reading from the N-terminus, the 1229-residue chain is ABC transporter B family member 3 (1229 aa).

The chain crosses the membrane as a helical span at residues 22-42; that stretch reads VLLMIVGSIGAIGNGVGFPLM. An ABC transmembrane type-1 1 domain is found at 25–313; sequence MIVGSIGAIG…TTPCLTAFAA (289 aa). A glycan (N-linked (GlcNAc...) asparagine) is linked at Asn-56. The next 5 membrane-spanning stretches (helical) occupy residues 73-93, 149-169, 172-192, 252-272, and 281-301; these read FVYL…CWMI, FIQL…KGWL, LVML…PIIV, GLGL…AIWF, and GYTG…SMSL. The 237-residue stretch at 348-584 folds into the ABC transporter 1 domain; that stretch reads IELRDVCFSY…HEGAYAQLIR (237 aa). 383–390 provides a ligand contact to ATP; that stretch reads GESGSGKS. An N-linked (GlcNAc...) asparagine glycan is attached at Asn-450. The segment covering 594-606 has biased composition (basic and acidic residues); sequence RLESSNELRDRSI. The segment at 594-614 is disordered; that stretch reads RLESSNELRDRSINRGSSRNI. Asn-645 carries N-linked (GlcNAc...) asparagine glycosylation. The next 2 membrane-spanning stretches (helical) occupy residues 661–681 and 706–726; these read ILIL…IFGI and MIFV…TYLF. Residues 662–949 form the ABC transmembrane type-1 2 domain; that stretch reads LILGTLLGAV…ASSFAPDSSK (288 aa). Asn-758 carries an N-linked (GlcNAc...) asparagine glycan. 3 helical membrane passes run 797–817, 888–908, and 923–943; these read IIAF…IPLI, GVGF…CFYV, and VFQV…ASSF. One can recognise an ABC transporter 2 domain in the interval 984–1222; the sequence is IELCHISFTY…EGGVYASLVQ (239 aa). 1019–1026 lines the ATP pocket; sequence GESGSGKS. N-linked (GlcNAc...) asparagine glycans are attached at residues Asn-1073 and Asn-1173.

The protein belongs to the ABC transporter superfamily. ABCB family. Multidrug resistance exporter (TC 3.A.1.201) subfamily.

The protein resides in the membrane. This Arabidopsis thaliana (Mouse-ear cress) protein is ABC transporter B family member 3 (ABCB3).